The following is a 213-amino-acid chain: Probable inactive serine/threonine-protein kinase DDB_G0280559 (213 aa).

Positions 1-211 constitute a Protein kinase domain; the sequence is MVLRYSYVFK…WNEIVNHSFF (211 aa).

It belongs to the protein kinase superfamily. Ser/Thr protein kinase family.

This is Probable inactive serine/threonine-protein kinase DDB_G0280559 from Dictyostelium discoideum (Social amoeba).